Reading from the N-terminus, the 364-residue chain is MEPGELMEVDTSQELDENTSAKETDQPKDAQNDPEIVCGDSNEVKKESPSVEEDQSSTETMSNEFEVAAAILEQENEDSGQNAPSLGELLSRSVNNYHPEHYSSPPLMRKPDFRFPIINPEKAQGKLFVLYQLIITVPDSLKKFPPYTSETNCLFSENDVDFWIYKVNSVIEQAPSNALILPGFNPDTNVNFSETVGEFINRSKGFVKKPNLEQIKAVIGAVIDIKAAVEYSSMKANRPSKNKVRSKNSNSEQKRTGNFLSQVVENLMTKVDANILSRRVGKLFKNHNECTFCNIKFISFFEMCRHVGSIQLRMKINHLRYQDVHVGTWVRFLASATPQKQTIEDVIDGGSSKKVHSPEIIYID.

Residues 1-17 (MEPGELMEVDTSQELDE) are compositionally biased toward acidic residues. A disordered region spans residues 1–61 (MEPGELMEVD…EEDQSSTETM (61 aa)). A compositionally biased stretch (basic and acidic residues) spans 19–31 (TSAKETDQPKDAQ).

This is an uncharacterized protein from Caenorhabditis elegans.